We begin with the raw amino-acid sequence, 190 residues long: MNEKACWQLPQDKESVYRHIFAGGVFAYPTEAVYGLGGNPADERAVCEILRLKGRTAAKGLIMVAGNWAQCCGWVSGVSKRDQAEMMDWAGDYPTTFIVYAGEKLCAHVATADGKTAIRISQHPLIQELCALIGQPLLSTSANLSGQEPARSVAAVRQYFPDLPMVLGALGAAERPSRIIDWHSRQVIRA.

Residues Pro10–Ala190 form the YrdC-like domain.

The protein belongs to the SUA5 family. TsaC subfamily.

Its subcellular location is the cytoplasm. The enzyme catalyses L-threonine + hydrogencarbonate + ATP = L-threonylcarbamoyladenylate + diphosphate + H2O. Functionally, required for the formation of a threonylcarbamoyl group on adenosine at position 37 (t(6)A37) in tRNAs that read codons beginning with adenine. Catalyzes the conversion of L-threonine, HCO(3)(-)/CO(2) and ATP to give threonylcarbamoyl-AMP (TC-AMP) as the acyladenylate intermediate, with the release of diphosphate. The protein is Threonylcarbamoyl-AMP synthase of Dichelobacter nodosus (strain VCS1703A).